A 528-amino-acid chain; its full sequence is Equilibrative nucleoside transporter 4 (528 aa).

The Extracellular portion of the chain corresponds to 1–68 (MGSIGSQRLK…EEPVPDDRYH (68 aa)). The chain crosses the membrane as a helical span at residues 69–89 (AIYFAMLLAGVGFLLPYNSFI). The Cytoplasmic portion of the chain corresponds to 90–101 (TDVDYLHHKYPG). A helical transmembrane segment spans residues 102–122 (TSIVFDMSLTYILVALAAVLL). The Extracellular segment spans residues 123–139 (NNVVVERLNLHTRITTG). The helical transmembrane segment at 140 to 160 (YLLALGPLLFISICDVWLQLF) threads the bilayer. Residues 161–166 (SHDQAY) are Cytoplasmic-facing. The chain crosses the membrane as a helical span at residues 167-187 (AINLAAVGTVAFGCTVQQSSF). Over 188–231 (YGYTGLLPKRYTQGVMTGESTAGVMISLSRILTKLLLPDERAST) the chain is Extracellular. The chain crosses the membrane as a helical span at residues 232-252 (IIFFLVSAGLELLCFLLHLLV). Residues 253–346 (RRSRFVLYYT…LLLHRYVVAR (94 aa)) are Cytoplasmic-facing. The chain crosses the membrane as a helical span at residues 347-367 (VIWADMLSIAVTYFITLCLFP). Residues 368-376 (GLESEIRHC) are Extracellular-facing. Residues 377 to 397 (VLGEWLPILVMAVFNLSDFVG) form a helical membrane-spanning segment. Over 398–411 (KILAALPVEWRGTH) the chain is Cytoplasmic. The helical transmembrane segment at 412–432 (LLACSCLRVVFIPLFILCVYP) threads the bilayer. Topologically, residues 433–445 (SGMPALRHPAWPC) are extracellular. A helical transmembrane segment spans residues 446-466 (VFSLLMGISNGYFGSVPMILA). Topologically, residues 467–481 (AGKVSPKQRELAGNT) are cytoplasmic. Residues 482-504 (MTVSYMSGLTLGSAVAYCTYSLT) traverse the membrane as a helical segment. At 505-528 (RDAHGSCFQTATAAAANDSIPVGP) the chain is on the extracellular side. Residue asparagine 521 is glycosylated (N-linked (GlcNAc...) asparagine).

This sequence belongs to the SLC29A/ENT transporter (TC 2.A.57) family. In terms of processing, N-glycosylated. Expressed in heart. Expressed in choroid plexus.

The protein localises to the cell membrane. It localises to the apical cell membrane. It catalyses the reaction serotonin(out) = serotonin(in). The enzyme catalyses dopamine(out) = dopamine(in). It carries out the reaction (R)-noradrenaline(out) = (R)-noradrenaline(in). The catalysed reaction is (R)-adrenaline(out) = (R)-adrenaline(in). It catalyses the reaction histamine(out) = histamine(in). The enzyme catalyses tyramine(in) = tyramine(out). It carries out the reaction guanidine(out) = guanidine(in). The catalysed reaction is adenine(out) = adenine(in). It catalyses the reaction adenosine(in) = adenosine(out). Activated at acidic pH. Electrogenic voltage-dependent transporter that mediates the transport of a variety of endogenous bioactive amines, cationic xenobiotics and drugs. Utilizes the physiologic inside-negative membrane potential as a driving force to facilitate cellular uptake of organic cations. Functions as a Na(+)- and Cl(-)-independent bidirectional transporter. Substrate transport is pH-dependent and enhanced under acidic condition, which is most likely the result of allosteric changes in the transporter structure. Implicated in monoamine neurotransmitters uptake such as serotonin, dopamine, adrenaline/epinephrine, noradrenaline/norepinephrine, histamine and tyramine, thereby supporting a role in homeostatic regulation of aminergic neurotransmission in the central nervous system. Also responsible for the uptake of bioactive amines and drugs through the blood-cerebrospinal fluid (CSF) barrier, from the CSF into choroid plexus epithelial cells, thereby playing a significant role in the clearance of cationic neurotoxins, xenobiotics and metabolic waste in the brain. Involved in bidirectional transport of the purine nucleoside adenosine and plays a role in the regulation of extracellular adenosine concentrations in cardiac tissues, in particular during ischemia. May be involved in organic cation uptake from the tubular lumen into renal tubular cells, thereby contributing to organic cation reabsorption in the kidney. Also transports adenine and guanidine. In Mus musculus (Mouse), this protein is Equilibrative nucleoside transporter 4.